The sequence spans 890 residues: Alanine--tRNA ligase (890 aa).

Zn(2+)-binding residues include histidine 568, histidine 572, cysteine 680, and histidine 684.

The protein belongs to the class-II aminoacyl-tRNA synthetase family. The cofactor is Zn(2+).

It is found in the cytoplasm. The catalysed reaction is tRNA(Ala) + L-alanine + ATP = L-alanyl-tRNA(Ala) + AMP + diphosphate. Catalyzes the attachment of alanine to tRNA(Ala) in a two-step reaction: alanine is first activated by ATP to form Ala-AMP and then transferred to the acceptor end of tRNA(Ala). Also edits incorrectly charged Ser-tRNA(Ala) and Gly-tRNA(Ala) via its editing domain. The protein is Alanine--tRNA ligase of Psychrobacter arcticus (strain DSM 17307 / VKM B-2377 / 273-4).